Here is a 1140-residue protein sequence, read N- to C-terminus: DNA damage-binding protein 1 (1140 aa).

Serine 2 carries the N-acetylserine modification. The tract at residues 2–768 is interaction with CDT1; it reads SYNYVVTAQK…QALSSSVSSS (767 aa). Residues 13–356 are WD repeat beta-propeller A; that stretch reads TAVNGCVTGH…VVAMETFTNL (344 aa). The interval 391–708 is WD repeat beta-propeller B; Interaction with CUL4A; it reads RNGIGIHEHA…LTIGTIDEIQ (318 aa). The interval 709–1043 is WD repeat beta-propeller C; sequence KLHIRTVPLY…NGMIGLVTSL (335 aa). An interaction with CDT1 and CUL4A region spans residues 771-1140; that stretch reads FSSSTAPHET…KVVEELTRIH (370 aa). Lysine 1067 carries the N6-acetyllysine modification. Lysine 1121 participates in a covalent cross-link: Glycyl lysine isopeptide (Lys-Gly) (interchain with G-Cter in SUMO2). Position 1125 is a phosphothreonine (threonine 1125).

Belongs to the DDB1 family. Component of the UV-DDB complex which includes DDB1 and DDB2; the heterodimer dimerizes to give rise to a heterotetramer when bound to damaged DNA. The UV-DDB complex interacts with monoubiquitinated histone H2A and binds to XPC via the DDB2 subunit. Component of numerous DCX (DDB1-CUL4-X-box) E3 ubiquitin-protein ligase complexes which consist of a core of DDB1, CUL4A or CUL4B and RBX1. DDB1 may recruit specific substrate targeting subunits to the DCX complex. These substrate targeting subunits are generally known as DCAF (DDB1- and CUL4-associated factor) or CDW (CUL4-DDB1-associated WD40-repeat) proteins. Interacts with AMBRA1, ATG16L1, BTRC, CRBN, DCAF1, DCAF4, DCAF5, DCAF6, DCAF7, DCAF8, DCAF9, DCAF10, DCAF11, DCAF12, DCAF15, DCAF16, DCAF17, DDA1, DET1, DTL, ERCC8, FBXW5, FBXW8, GRWD1, KATNB1, NLE1, NUP43, PAFAH1B1, PHIP, PWP1, RBBP4, RBBP5, RBBP7, COP1, SNRNP40, DCAF1, WDR5, WDR5B, WDR12, WDR26, WDR39, WDR42, WDR53, WDR59, WDR61, WSB1, WSB2, LRWD1 and WDTC1. DCX complexes may associate with the COP9 signalosome, and this inhibits the E3 ubiquitin-protein ligase activity of the complex. Interacts with NF2, TSC1 and TSC2. Interacts with AGO1 and AGO2. Associates with the E3 ligase complex containing DYRK2, EDD/UBR5, DDB1 and DCAF1 proteins (EDVP complex). Interacts directly with DYRK2. DCX(DTL) complex interacts with FBXO11; does not ubiquitinate and degradate FBXO11. Interacts with TRPC4AP. Interacts with CRY1 and CRY2. The DDB1-CUL4A complex interacts with CRY1. May also interact with DCUN1D1, DCUN1D2, DCUN1D3 and DCUN1D5. Component of the DCX(DCAF13) E3 ubiquitin ligase complex, at least composed of CUL4 (CUL4A or CUL4B), DDB1, DCAF13 and RBX1. Interacts with DCAF13 (via WD40 domain). In terms of processing, phosphorylated by ABL1. Ubiquitinated by CUL4A. Subsequently degraded by ubiquitin-dependent proteolysis. Post-translationally, acetylated, promoting interaction with CUL4 (CUL4A or CUL4B) and subsequent formation of DCX (DDB1-CUL4-X-box) E3 ubiquitin-protein ligase complexes. Deacetylation by SIRT7 impairs the interaction with CUL4 (CUL4A or CUL4B) and formation of DCX (DDB1-CUL4-X-box) E3 ubiquitin-protein ligase complexes.

The protein localises to the cytoplasm. It is found in the nucleus. Its pathway is protein modification; protein ubiquitination. Protein, which is both involved in DNA repair and protein ubiquitination, as part of the UV-DDB complex and DCX (DDB1-CUL4-X-box) complexes, respectively. Core component of the UV-DDB complex (UV-damaged DNA-binding protein complex), a complex that recognizes UV-induced DNA damage and recruit proteins of the nucleotide excision repair pathway (the NER pathway) to initiate DNA repair. The UV-DDB complex preferentially binds to cyclobutane pyrimidine dimers (CPD), 6-4 photoproducts (6-4 PP), apurinic sites and short mismatches. Also functions as a component of numerous distinct DCX (DDB1-CUL4-X-box) E3 ubiquitin-protein ligase complexes which mediate the ubiquitination and subsequent proteasomal degradation of target proteins. The functional specificity of the DCX E3 ubiquitin-protein ligase complex is determined by the variable substrate recognition component recruited by DDB1. DCX(DDB2) (also known as DDB1-CUL4-ROC1, CUL4-DDB-ROC1 and CUL4-DDB-RBX1) may ubiquitinate histone H2A, histone H3 and histone H4 at sites of UV-induced DNA damage. The ubiquitination of histones may facilitate their removal from the nucleosome and promote subsequent DNA repair. DCX(DDB2) also ubiquitinates XPC, which may enhance DNA-binding by XPC and promote NER. DCX(DTL) plays a role in PCNA-dependent polyubiquitination of CDT1 and MDM2-dependent ubiquitination of TP53 in response to radiation-induced DNA damage and during DNA replication. DCX(ERCC8) (the CSA complex) plays a role in transcription-coupled repair (TCR). The DDB1-CUL4A-DTL E3 ligase complex regulates the circadian clock function by mediating the ubiquitination and degradation of CRY1. DDB1-mediated CRY1 degradation promotes FOXO1 protein stability and FOXO1-mediated gluconeogenesis in the liver. By acting on TET dioxygenses, essential for oocyte maintenance at the primordial follicle stage, hence essential for female fertility. Maternal factor required for proper zygotic genome activation and genome reprogramming. The protein is DNA damage-binding protein 1 (DDB1) of Pongo abelii (Sumatran orangutan).